We begin with the raw amino-acid sequence, 186 residues long: Elongation factor P (186 aa).

The protein belongs to the elongation factor P family.

The protein resides in the cytoplasm. The protein operates within protein biosynthesis; polypeptide chain elongation. Involved in peptide bond synthesis. Stimulates efficient translation and peptide-bond synthesis on native or reconstituted 70S ribosomes in vitro. Probably functions indirectly by altering the affinity of the ribosome for aminoacyl-tRNA, thus increasing their reactivity as acceptors for peptidyl transferase. In Pelagibacter ubique (strain HTCC1062), this protein is Elongation factor P.